The following is a 502-amino-acid chain: UDP-N-acetylmuramoylalanine--D-glutamate ligase (502 aa).

Residue 129-135 (GTNGKTT) participates in ATP binding.

Belongs to the MurCDEF family.

Its subcellular location is the cytoplasm. The catalysed reaction is UDP-N-acetyl-alpha-D-muramoyl-L-alanine + D-glutamate + ATP = UDP-N-acetyl-alpha-D-muramoyl-L-alanyl-D-glutamate + ADP + phosphate + H(+). It functions in the pathway cell wall biogenesis; peptidoglycan biosynthesis. Cell wall formation. Catalyzes the addition of glutamate to the nucleotide precursor UDP-N-acetylmuramoyl-L-alanine (UMA). In Burkholderia ambifaria (strain MC40-6), this protein is UDP-N-acetylmuramoylalanine--D-glutamate ligase.